Here is a 1923-residue protein sequence, read N- to C-terminus: Nuclear pore complex protein GP210 (1923 aa).

The signal sequence occupies residues 1-22; that stretch reads MVPVSFCFFFLLLLLSAGESSS. Asn-73, Asn-117, Asn-289, Asn-609, Asn-863, Asn-903, Asn-967, Asn-982, Asn-1171, Asn-1199, Asn-1550, Asn-1568, and Asn-1743 each carry an N-linked (GlcNAc...) asparagine glycan. Residues 1152–1205 enclose the BIG2 domain; the sequence is IFLVPGASYVLTIEGGPTMNVSVDYTTVDNEVAKIEKSGRLYATSPGNTTIYAT. The helical transmembrane segment at 1829 to 1849 threads the bilayer; it reads SVLLKILWGVLVLVVSVIILM.

It belongs to the NUP210 family. As to quaternary structure, part of the nuclear pore complex (NPC). The NPC has an eight-fold symmetrical structure comprising a central transport channel and two rings, the cytoplasmic and nuclear rings, to which eight filaments are attached. The cytoplasmic filaments have loose ends, while the nuclear filaments are joined in a distal ring, forming a nuclear basket. NPCs are highly dynamic in configuration and composition, and can be devided in 3 subcomplexes, the NUP62 subcomplex, the NUP107-160 subcomplex and the NUP93 subcomplex, containing approximately 30 different nucleoporin proteins.

The protein resides in the nucleus envelope. It is found in the nucleus membrane. The protein localises to the nucleus. Its subcellular location is the nuclear pore complex. The polypeptide is Nuclear pore complex protein GP210 (Arabidopsis thaliana (Mouse-ear cress)).